We begin with the raw amino-acid sequence, 162 residues long: Transcriptional regulator MraZ (162 aa).

SpoVT-AbrB domains follow at residues 11–62 and 98–141; these read EHPS…GLSV and AVEC…SRDT.

Belongs to the MraZ family. In terms of assembly, forms oligomers.

It localises to the cytoplasm. Its subcellular location is the nucleoid. The sequence is that of Transcriptional regulator MraZ from Pelobacter propionicus (strain DSM 2379 / NBRC 103807 / OttBd1).